The primary structure comprises 78 residues: Conotoxin TsMSGL-11 (78 aa).

A signal peptide spans 1–24 (MSGLGIMVLTLLLLVFMATSHQDA). Positions 25–44 (GEKQATQRDAINVRRRRSIT) are excised as a propeptide. Disulfide bonds link Cys-51/Cys-63, Cys-55/Cys-72, and Cys-62/Cys-76. Position 77 is a phenylalanine amide (Phe-77).

It belongs to the conotoxin O3 superfamily. In terms of tissue distribution, expressed by the venom duct.

Its subcellular location is the secreted. The polypeptide is Conotoxin TsMSGL-11 (Conus tessulatus (Tessellate cone)).